A 466-amino-acid polypeptide reads, in one-letter code: 3-isopropylmalate dehydratase large subunit (466 aa).

Residues C347, C407, and C410 each contribute to the [4Fe-4S] cluster site.

It belongs to the aconitase/IPM isomerase family. LeuC type 1 subfamily. In terms of assembly, heterodimer of LeuC and LeuD. [4Fe-4S] cluster is required as a cofactor.

The enzyme catalyses (2R,3S)-3-isopropylmalate = (2S)-2-isopropylmalate. The protein operates within amino-acid biosynthesis; L-leucine biosynthesis; L-leucine from 3-methyl-2-oxobutanoate: step 2/4. Functionally, catalyzes the isomerization between 2-isopropylmalate and 3-isopropylmalate, via the formation of 2-isopropylmaleate. This chain is 3-isopropylmalate dehydratase large subunit, found in Klebsiella pneumoniae (strain 342).